The following is an 87-amino-acid chain: MSASADSLAAAASLDKYGDEDIFSLLIRYGLYVGALFQFVCISAAVLMENNPDVNSNPETGEVTEREGEPVRTRLHKIRKLEKKKRR.

A helical membrane pass occupies residues 25–47 (LLIRYGLYVGALFQFVCISAAVL). The interval 52–87 (PDVNSNPETGEVTEREGEPVRTRLHKIRKLEKKKRR) is disordered. The span at 63–72 (VTEREGEPVR) shows a compositional bias: basic and acidic residues. Basic residues predominate over residues 73–87 (TRLHKIRKLEKKKRR).

Belongs to the UPF0239 family.

The protein resides in the membrane. The polypeptide is Protein anon-73B1 (Drosophila erecta (Fruit fly)).